The following is a 117-amino-acid chain: Large ribosomal subunit protein bL20 (117 aa).

Belongs to the bacterial ribosomal protein bL20 family.

Binds directly to 23S ribosomal RNA and is necessary for the in vitro assembly process of the 50S ribosomal subunit. It is not involved in the protein synthesizing functions of that subunit. This Neorickettsia sennetsu (strain ATCC VR-367 / Miyayama) (Ehrlichia sennetsu) protein is Large ribosomal subunit protein bL20.